The sequence spans 315 residues: Acetaldehyde dehydrogenase 1 (315 aa).

An NAD(+)-binding site is contributed by 12–15 (SGNI). Cys-132 acts as the Acyl-thioester intermediate in catalysis. NAD(+) contacts are provided by residues 163–171 (SAGPGTRAN) and Asn-291.

This sequence belongs to the acetaldehyde dehydrogenase family.

It carries out the reaction acetaldehyde + NAD(+) + CoA = acetyl-CoA + NADH + H(+). This Paraburkholderia phymatum (strain DSM 17167 / CIP 108236 / LMG 21445 / STM815) (Burkholderia phymatum) protein is Acetaldehyde dehydrogenase 1.